Reading from the N-terminus, the 268-residue chain is tRNA pseudouridine synthase A (268 aa).

The Nucleophile role is filled by D52. Position 110 (Y110) interacts with substrate.

It belongs to the tRNA pseudouridine synthase TruA family. In terms of assembly, homodimer.

It carries out the reaction uridine(38/39/40) in tRNA = pseudouridine(38/39/40) in tRNA. In terms of biological role, formation of pseudouridine at positions 38, 39 and 40 in the anticodon stem and loop of transfer RNAs. The chain is tRNA pseudouridine synthase A from Prochlorococcus marinus (strain MIT 9215).